The sequence spans 1336 residues: MEENEVESSSDAAPRPGQPEEPSESGLGVGTSEAVSADSTDAATAPGLTEADDSGVGQSSDSGSRSVEEVSESISTEPLPQGYLPDSSSVSRGPVAEVPGGPPALVHSSALPDPSMLVSDCTASSSDLGSAIDKIIESTIGPDLIQSCITVTSGEEGGAETTQYLILQGPDDGAPMASSMSTSTLANSLAAIEALADGPTSTSTCLEPAEQPPGEPSSLAQPPAPVVEELDLQGLEAMMEVVVVQQFKCKMCQYRSSTKATLLRHMRERHFRPALAVAAAAAGKRGRVRKWGTSTKTTEEEGPEEEEEDDDIVDAGAIDDLEEDSDYNPAEDEPRGRQLRLQRPTPSTLRPRRRPGRPRKLPRLETSDLHDGIGEPLVSSQSTQSPPELQDLEAPSSSDLRALGKVGRGLVETGVSQSDAENAAPSCQDEADVPPRRRGRPSRRFLGKKYRKYYYKSPKPLLRPYLCRICGSRFLSHEDLRFHVNSHEAGDPQLFKCLQCSYRSRRWSSLKEHMFNHVGSKPYKCDECSYTSVYRKDVIRHAAVHSQDRKKRPDPTPKLSSFPCPVCGRVYPMQKRLTQHMKTHSTEKPHMCDKCGKSFKKRYTFKMHLLTHIQAVANRRFKCEFCEFVCEDKKALLNHQLSHVSDKPFKCSFCPYRTFREDFLLSHVAVKHTGAKPFACEYCHFSTRHKKNLRLHVRCRHANSFEEWGRRHPEEPPSRRRPFFSLQQIEELKQQHSAAPGPPLSSAGPEAPQEPAPFQPPETPPLLCPDALGGATIIYQQGAEESTAMATQTALDLLLNMSAQRELGATALQVAVVKSEDVEAELTSTARQPSSEDTTPRVVTLHVAESGSSVAAESQLGPSDLQQIALPPGPFSGASYSVITAPPVEGRASASGPPYREEPPGEAAQAVVVNDTLKEAGTHYIMAADGTQLHHIELTADGSISFPSPDTLAPGTKWPLLQCGGPPRDGPEVLSPTKTHHTGGSQGSSTPPPATSHALGLLVPHSPPSAAASSTKKFSCKVCSEAFPSRAEMESHKRAHAGPAAFKCPDCPFSARQWPEVRAHMAQHSSLRPHQCNQCSFASKNKKDLRRHMLTHTNEKPFSCHVCGQRFNRNGHLKFHIQRLHSIDGRKTGTSTARAPAQTIILNSEEETLATLHTAFQSNHGTLGTERLQQALSQEHIIVAQEQTVANQEEATYIQEITADGQTVQHLVTSDNQVQYIISQDGVQHLLPQEYVVVPDGHHIQVQEGQITHIQYEQGTPFLQESQIQYVPVSPSQQLVTQAQLEAAAHSAVTAVADAAMAQAQGLFGTEEAVPEHIQQLQHQGIEYDVITLSDD.

Disordered stretches follow at residues 1 to 108 (MEEN…LVHS) and 199 to 222 (PTST…LAQP). 2 stretches are compositionally biased toward low complexity: residues 31 to 45 (TSEA…AATA) and 54 to 65 (SGVGQSSDSGSR). A C2H2-type 1 zinc finger spans residues 247-270 (FKCKMCQYRSSTKATLLRHMRERH). 2 disordered regions span residues 282–398 (AGKR…PSSS) and 415–442 (VSQS…GRPS). Residues 300 to 331 (EEGPEEEEEDDDIVDAGAIDDLEEDSDYNPAE) show a composition bias toward acidic residues. Residues 339-349 (LRLQRPTPSTL) are compositionally biased toward low complexity. The span at 350-361 (RPRRRPGRPRKL) shows a compositional bias: basic residues. A compositionally biased stretch (basic and acidic residues) spans 362–373 (PRLETSDLHDGI). Over residues 378 to 387 (VSSQSTQSPP) the composition is skewed to polar residues. C2H2-type zinc fingers lie at residues 465–487 (YLCR…VNSH), 495–517 (FKCL…MFNH), 523–545 (YKCD…AAVH), 562–584 (FPCP…MKTH), 590–612 (HMCD…LLTH), 621–643 (FKCE…QLSH), 649–672 (FKCS…AVKH), and 678–701 (FACE…RCRH). 2 disordered regions span residues 732 to 766 (LKQQ…TPPL) and 961 to 1013 (LQCG…AAAS). The span at 752-766 (PQEPAPFQPPETPPL) shows a compositional bias: pro residues. Ser975 and Ser1006 each carry phosphoserine. 4 consecutive C2H2-type zinc fingers follow at residues 1018-1040 (FSCK…KRAH), 1046-1068 (FKCP…MAQH), 1074-1096 (HQCN…MLTH), and 1102-1125 (FSCH…QRLH). Lys1021 is covalently cross-linked (Glycyl lysine isopeptide (Lys-Gly) (interchain with G-Cter in SUMO2)). Ser1148 is modified (phosphoserine).

Belongs to the krueppel C2H2-type zinc-finger protein family. As to quaternary structure, interacts with NCOA6; may enhance ligand-dependent transcriptional activation by nuclear hormone receptors. Interacts with CNOT6. Interacts with CNOT9; the interaction is direct. Component of a nuclear receptor-mediated transcription complex composed of at least ZNF335, CCAR2 and EMSY; the complex stimulates the transcription of nuclear receptor target genes such as SOX9 and HOXA1. Within the complex interacts with EMSY and interacts (via C-terminus) with CCAR2. Interacts with members of histone H3'Lys4'(H3K4) methyltransferase complexes ASH2L, CXXC1, KMT2A/MLL1, RBBP5, SETD1A and WDR5. Component of a histone methylation complex composed of at least ZNF335, RBBP5, ASH2L and WDR5; the complex may have histone H3-specific methyltransferase activity, however does not have specificity for 'Lys-4' of histone H3. Interacts with RBBP5 and WDR5. Interacts with ASHL2. Components of this complex may associate with components of the ZNF335-CCAR2-EMSY nuclear receptor-mediated transcription complex to form a complex at least composed of ZNF335, HCFC1, CCAR2, EMSY, MKI67, RBBP5, ASH2L and WDR5. Within this complex also interacts with HCFC1 and MKI67.

It localises to the nucleus. In terms of biological role, component or associated component of some histone methyltransferase complexes may regulate transcription through recruitment of those complexes on gene promoters. Enhances ligand-dependent transcriptional activation by nuclear hormone receptors. Plays an important role in neural progenitor cell proliferation and self-renewal through the regulation of specific genes involved brain development, including REST. Also controls the expression of genes involved in somatic development and regulates, for instance, lymphoblast proliferation. The protein is Zinc finger protein 335 (Znf335) of Rattus norvegicus (Rat).